A 180-amino-acid polypeptide reads, in one-letter code: NAD(P)H-quinone oxidoreductase subunit I, chloroplastic (180 aa).

4Fe-4S ferredoxin-type domains are found at residues 55–84 (GRIH…VDWR) and 95–124 (LNYS…MTEE). Cys64, Cys67, Cys70, Cys74, Cys104, Cys107, Cys110, and Cys114 together coordinate [4Fe-4S] cluster.

This sequence belongs to the complex I 23 kDa subunit family. NDH is composed of at least 16 different subunits, 5 of which are encoded in the nucleus. Requires [4Fe-4S] cluster as cofactor.

It localises to the plastid. The protein resides in the chloroplast thylakoid membrane. The enzyme catalyses a plastoquinone + NADH + (n+1) H(+)(in) = a plastoquinol + NAD(+) + n H(+)(out). The catalysed reaction is a plastoquinone + NADPH + (n+1) H(+)(in) = a plastoquinol + NADP(+) + n H(+)(out). In terms of biological role, NDH shuttles electrons from NAD(P)H:plastoquinone, via FMN and iron-sulfur (Fe-S) centers, to quinones in the photosynthetic chain and possibly in a chloroplast respiratory chain. The immediate electron acceptor for the enzyme in this species is believed to be plastoquinone. Couples the redox reaction to proton translocation, and thus conserves the redox energy in a proton gradient. In Agrostis stolonifera (Creeping bentgrass), this protein is NAD(P)H-quinone oxidoreductase subunit I, chloroplastic.